We begin with the raw amino-acid sequence, 2147 residues long: Non-reducing polyketide synthase albA (2147 aa).

The tract at residues 8–244 (YLFGDQTSDI…VKAPIHGPYH (237 aa)) is N-terminal acylcarrier protein transacylase domain (SAT). The Ketosynthase family 3 (KS3) domain occupies 375–806 (CSKIAIIGMS…GGNTAILLED (432 aa)). Residues Cys547, His682, and His724 each act as for beta-ketoacyl synthase activity in the active site. The tract at residues 912-1232 (FVFTGQGAQY…LSSLHLAGID (321 aa)) is malonyl-CoA:ACP transacylase (MAT) domain. Ser1001 functions as the For acyl/malonyl transferase activity in the catalytic mechanism. Positions 1286–1425 (HEFLTTAAQK…CTVRFFDCAA (140 aa)) are N-terminal hotdog fold. The region spanning 1286–1598 (HEFLTTAAQK…FQGLSRKILD (313 aa)) is the PKS/mFAS DH domain. Residues 1290-1603 (TTAAQKVIET…RKILDTVLPP (314 aa)) form a product template (PT) domain region. His1326 acts as the Proton acceptor; for dehydratase activity in catalysis. The segment at 1452 to 1598 (DAHRLGRGMV…FQGLSRKILD (147 aa)) is C-terminal hotdog fold. The active-site Proton donor; for dehydratase activity is the Asp1511. Residues 1608–1637 (KGPARPAASAQKAAPAATSKSRASAPAPAK) are disordered. A compositionally biased stretch (low complexity) spans 1610 to 1637 (PARPAASAQKAAPAATSKSRASAPAPAK). In terms of domain architecture, Carrier 1 spans 1642–1719 (PSAPSLVKRA…DFKQFLAPMS (78 aa)). Ser1679 is subject to O-(pantetheine 4'-phosphoryl)serine. The interval 1719-1759 (SQGEASDGSTSDPESSSSFNGGSSTDESSAGSPVSSPPNEK) is disordered. Residues 1724-1747 (SDGSTSDPESSSSFNGGSSTDESS) are compositionally biased toward low complexity. In terms of domain architecture, Carrier 2 spans 1760–1837 (IEQHATMKEI…DVEDALGLKP (78 aa)). Ser1797 carries the O-(pantetheine 4'-phosphoryl)serine modification. The tract at residues 1873–2145 (SPHPRSTSIL…ELGSFIGNAM (273 aa)) is claisen cyclase domain. The active-site For Claisen cyclase activity is the Ser1963.

It catalyses the reaction 6 malonyl-CoA + acetyl-CoA + 6 H(+) = naphtopyrone YWA1 + 6 CO2 + 7 CoA + H2O. It participates in secondary metabolite biosynthesis. Functionally, non-reducing polyketide synthase involved in the biosynthesis of bifonsecin B, a dimeric gamma-naphthopyrone. The first step in the biosynthesis of bifonsecin B is the production of gamma-naphthopyrone precursor YWA1 by the non-reducing polyketide synthase albA, via condensation of one acetyl-CoA starter unit with 6 malonyl-CoA units. YWA1 is then methylated by bfoE at position C-6 to yield foncesin which is further methylated at position C-8 by bfoD to produce fonsecin B. A key enzyme in the biosynthetic pathway is the cytochrome P450 monooxygenase bfoB which catalyzes the oxidative dimerization of fonsecin B to bifonsecin B. Bfob also catalyzes the oxidative dimerization of rubrofusarin B into nigerone. The stereoselectivity of bfoB is influenced by the two natural monomeric substrates; homodimerization of fonsecin B yields a stereochemically pure biaryl, M-foncerine B, while rubrofusarin B yields a mixture of enantiomers M- and P-nigerone. This is Non-reducing polyketide synthase albA from Aspergillus brasiliensis (strain CBS 101740 / IMI 381727 / IBT 21946).